We begin with the raw amino-acid sequence, 334 residues long: Serine/threonine-protein kinase (334 aa).

The Protein kinase domain occupies 53 to 333; sequence FEVLQPLQSG…DEILNFGMWT (281 aa). ATP-binding positions include 59-67 and Lys-82; that span reads LQSGSEGRV. The Proton acceptor role is filled by Asp-167.

It belongs to the protein kinase superfamily. Ser/Thr protein kinase family.

It catalyses the reaction L-seryl-[protein] + ATP = O-phospho-L-seryl-[protein] + ADP + H(+). The catalysed reaction is L-threonyl-[protein] + ATP = O-phospho-L-threonyl-[protein] + ADP + H(+). Functionally, able to phosphorylate in vitro the major virion phosphoprotein phosphorylated in vivo. This Sus scrofa (Pig) protein is Serine/threonine-protein kinase (PK).